Consider the following 358-residue polypeptide: Putative myc-like protein MYCLP1 (358 aa).

2 disordered regions span residues 150 to 171 (ACSR…TVKK) and 219 to 245 (QEGA…DKED). The segment covering 227-242 (PPKEALEREAPGGKDD) has biased composition (basic and acidic residues). The bHLH domain occupies 274-326 (WTKKKYHSYLERKRRNDQRSRFLALRDEVPALASCSRVSKVMILVKATEYLHE).

In terms of assembly, efficient DNA binding requires dimerization with another bHLH protein. Binds DNA as a heterodimer with MAX. Detected in adult testis.

The protein resides in the nucleus. The protein is Putative myc-like protein MYCLP1 (MYCLP1) of Homo sapiens (Human).